The primary structure comprises 418 residues: Thyroid hormone receptor alpha (418 aa).

Positions 1-41 (MDQNLSGLDCLSEPDEKRWPDGKRKRKNSQCMGKSGMSGDS) are disordered. The segment at 1-60 (MDQNLSGLDCLSEPDEKRWPDGKRKRKNSQCMGKSGMSGDSSVSLLSAGYIPSYLTKDEP) is modulating. Residues Cys61, Cys64, Cys78, Cys81, Cys99, Cys105, Cys115, and Cys118 each contribute to the Zn(2+) site. 2 NR C4-type zinc fingers span residues 61–81 (CVVCSDKATGYHYRCITCEGC) and 99–123 (CKYDGCCIIDKITRNQCQLCRFKKC). The segment at residues 61–135 (CVVCSDKATG…VGMAMDLVLD (75 aa)) is a DNA-binding region (nuclear receptor). The region spanning 171–415 (EEWELIRIVT…PPLFLEVFED (245 aa)) is the NR LBD domain. Residues Arg236 and Ser285 each coordinate 3,3',5-triiodo-L-thyronine.

Belongs to the nuclear hormone receptor family. NR1 subfamily. In terms of tissue distribution, highest level of expression in erythrocytes. Also expressed in liver, tail, eye, muscle and skin.

The protein resides in the nucleus. Its function is as follows. Nuclear hormone receptor that can act as a repressor or activator of transcription. High affinity receptor for thyroid hormones, including triiodothyronine and thyroxine. In Aquarana catesbeiana (American bullfrog), this protein is Thyroid hormone receptor alpha (thra).